The sequence spans 486 residues: Glutamyl-tRNA(Gln) amidotransferase subunit A (486 aa).

Active-site charge relay system residues include K75 and S150. S174 functions as the Acyl-ester intermediate in the catalytic mechanism.

This sequence belongs to the amidase family. GatA subfamily. As to quaternary structure, heterotrimer of A, B and C subunits.

It catalyses the reaction L-glutamyl-tRNA(Gln) + L-glutamine + ATP + H2O = L-glutaminyl-tRNA(Gln) + L-glutamate + ADP + phosphate + H(+). Allows the formation of correctly charged Gln-tRNA(Gln) through the transamidation of misacylated Glu-tRNA(Gln) in organisms which lack glutaminyl-tRNA synthetase. The reaction takes place in the presence of glutamine and ATP through an activated gamma-phospho-Glu-tRNA(Gln). This Trichormus variabilis (strain ATCC 29413 / PCC 7937) (Anabaena variabilis) protein is Glutamyl-tRNA(Gln) amidotransferase subunit A.